The following is a 156-amino-acid chain: IFN signaling evasion protein OPG029 (156 aa).

The protein belongs to the orthopoxvirus OPG029 family. Interacts with host TANK, TBKBP1 and AZI2; these interactions prevent interferon production. Interacts with host STAT2.

Functionally, prevents establishment of cellular antiviral state by blocking virus-induced phosphorylation and activation of interferon regulatory factors 3/IRF3 and 7/IRF7, transcription factors critical for the induction of interferons alpha and beta. This blockage is produced through the inhibition of host TBK1, by binding host TBK1 adapter proteins TBKBP1 and AZI2, thereby producing a strong inhibition of the phosphorylation and activation of IRF3 and IRF7. Also acts as an inhibitor of the cellular response to type I IFN by interacting with host STAT2. Mechanistically, exerts its inhibitory effect after host ISGF3 complex (composed of STAT1, STAT2 and IRF9) binding to the interferon stimulated response element (ISRE). This chain is IFN signaling evasion protein OPG029 (OPG029), found in Variola virus (isolate Human/India/Ind3/1967) (VARV).